Consider the following 433-residue polypeptide: Signal recognition particle 54 kDa protein (433 aa).

GTP contacts are provided by residues 106–113 (GVEGSGKT), 186–190 (DTAGR), and 244–247 (TKMD).

It belongs to the GTP-binding SRP family. SRP54 subfamily. As to quaternary structure, part of the signal recognition particle protein translocation system, which is composed of SRP and FtsY. Archaeal SRP consists of a 7S RNA molecule of 300 nucleotides and two protein subunits: SRP54 and SRP19.

The protein resides in the cytoplasm. The enzyme catalyses GTP + H2O = GDP + phosphate + H(+). Its function is as follows. Involved in targeting and insertion of nascent membrane proteins into the cytoplasmic membrane. Binds to the hydrophobic signal sequence of the ribosome-nascent chain (RNC) as it emerges from the ribosomes. The SRP-RNC complex is then targeted to the cytoplasmic membrane where it interacts with the SRP receptor FtsY. In Pyrobaculum islandicum (strain DSM 4184 / JCM 9189 / GEO3), this protein is Signal recognition particle 54 kDa protein.